The primary structure comprises 82 residues: UPF0291 protein PEPE_0871 (82 aa).

The protein belongs to the UPF0291 family.

It localises to the cytoplasm. This is UPF0291 protein PEPE_0871 from Pediococcus pentosaceus (strain ATCC 25745 / CCUG 21536 / LMG 10740 / 183-1w).